The following is a 719-amino-acid chain: Pesticidal crystal protein Cry1Ic (719 aa).

It belongs to the delta endotoxin family.

Promotes colloidosmotic lysis by binding to the midgut epithelial cells of insects. The chain is Pesticidal crystal protein Cry1Ic (cry1Ic) from Bacillus thuringiensis.